Reading from the N-terminus, the 644-residue chain is Threonine--tRNA ligase (644 aa).

In terms of domain architecture, TGS spans 3 to 64; it reads EMIRITFPDG…QEDGSISIIT (62 aa). A catalytic region spans residues 245-542; the sequence is DHRKLGKELE…LIEEYKGAFP (298 aa). Positions 338, 389, and 519 each coordinate Zn(2+).

This sequence belongs to the class-II aminoacyl-tRNA synthetase family. Homodimer. Requires Zn(2+) as cofactor.

It localises to the cytoplasm. It carries out the reaction tRNA(Thr) + L-threonine + ATP = L-threonyl-tRNA(Thr) + AMP + diphosphate + H(+). Its function is as follows. Catalyzes the attachment of threonine to tRNA(Thr) in a two-step reaction: L-threonine is first activated by ATP to form Thr-AMP and then transferred to the acceptor end of tRNA(Thr). Also edits incorrectly charged L-seryl-tRNA(Thr). The sequence is that of Threonine--tRNA ligase from Geobacillus sp. (strain WCH70).